Reading from the N-terminus, the 198-residue chain is Recombination protein RecR (198 aa).

The C4-type zinc-finger motif lies at 57 to 72; it reads CDKCNTFTEAQICEVC. Positions 80–175 constitute a Toprim domain; it reads TLLCVVETPA…AVTRLARGVP (96 aa).

Belongs to the RecR family.

Its function is as follows. May play a role in DNA repair. It seems to be involved in an RecBC-independent recombinational process of DNA repair. It may act with RecF and RecO. In Burkholderia multivorans (strain ATCC 17616 / 249), this protein is Recombination protein RecR.